Consider the following 356-residue polypeptide: Histidinol-phosphate aminotransferase (356 aa).

An N6-(pyridoxal phosphate)lysine modification is found at Lys-214.

This sequence belongs to the class-II pyridoxal-phosphate-dependent aminotransferase family. Histidinol-phosphate aminotransferase subfamily. In terms of assembly, homodimer. Pyridoxal 5'-phosphate serves as cofactor.

It catalyses the reaction L-histidinol phosphate + 2-oxoglutarate = 3-(imidazol-4-yl)-2-oxopropyl phosphate + L-glutamate. It functions in the pathway amino-acid biosynthesis; L-histidine biosynthesis; L-histidine from 5-phospho-alpha-D-ribose 1-diphosphate: step 7/9. The protein is Histidinol-phosphate aminotransferase of Escherichia coli O45:K1 (strain S88 / ExPEC).